A 151-amino-acid chain; its full sequence is MQVILKEKVENLGVLGDIVNVKPGYARNFLIPFGKAVQATQANIKAFEAQKAELEKAEKARFEAAVAVADAIKDKVYTIAAQAGEGGKLFGSVGIAEVAEAVSNQSGKKIEKSQVRMPEGVIRSIGEFELTVHVYTDVDADIKVNVVAAEA.

It belongs to the bacterial ribosomal protein bL9 family.

In terms of biological role, binds to the 23S rRNA. This is Large ribosomal subunit protein bL9 from Francisella tularensis subsp. holarctica (strain LVS).